Here is a 162-residue protein sequence, read N- to C-terminus: MFIDTSELCDLYAEQVDVVEPIFSSFGGVSHFYGKVTTVKCFESNGLIAEVLEENGEGRVLVIDGGGAVRRGLIDAELAQLAVDNGWEGIIVYGAVRQIQQLENLDIGIHALAPIPVSADESSAGESDIPVNFGGVTFFPEDYIYADLTGIILSQEPLDLED.

Belongs to the RraA family. As to quaternary structure, homotrimer. Binds to both RNA-binding sites in the C-terminal region of Rne and to RhlB.

It is found in the cytoplasm. Functionally, globally modulates RNA abundance by binding to RNase E (Rne) and regulating its endonucleolytic activity. Can modulate Rne action in a substrate-dependent manner by altering the composition of the degradosome. Modulates RNA-binding and helicase activities of the degradosome. The polypeptide is Regulator of ribonuclease activity A (Haemophilus influenzae (strain 86-028NP)).